The following is a 288-amino-acid chain: Bifunctional protein FolD (288 aa).

NADP(+)-binding positions include 166 to 168 (GAS) and isoleucine 232.

Belongs to the tetrahydrofolate dehydrogenase/cyclohydrolase family. In terms of assembly, homodimer.

The enzyme catalyses (6R)-5,10-methylene-5,6,7,8-tetrahydrofolate + NADP(+) = (6R)-5,10-methenyltetrahydrofolate + NADPH. It catalyses the reaction (6R)-5,10-methenyltetrahydrofolate + H2O = (6R)-10-formyltetrahydrofolate + H(+). Its pathway is one-carbon metabolism; tetrahydrofolate interconversion. Catalyzes the oxidation of 5,10-methylenetetrahydrofolate to 5,10-methenyltetrahydrofolate and then the hydrolysis of 5,10-methenyltetrahydrofolate to 10-formyltetrahydrofolate. In Klebsiella pneumoniae (strain 342), this protein is Bifunctional protein FolD.